Consider the following 606-residue polypeptide: Membrane protein insertase YidC (606 aa).

The chain crosses the membrane as a helical span at residues 8–28 (LILATALSFLVILVWFLLFPP). A compositionally biased stretch (low complexity) spans 59–78 (TEAAPGAAPQTAATPTENAP). The tract at residues 59–79 (TEAAPGAAPQTAATPTENAPR) is disordered. 4 helical membrane passes run 378-398 (MGVA…PLAW), 448-468 (LPIL…FVTI), 506-526 (SILA…SMWL), and 542-562 (IFAW…SGLI).

Belongs to the OXA1/ALB3/YidC family. Type 1 subfamily. Interacts with the Sec translocase complex via SecD. Specifically interacts with transmembrane segments of nascent integral membrane proteins during membrane integration.

Its subcellular location is the cell inner membrane. In terms of biological role, required for the insertion and/or proper folding and/or complex formation of integral membrane proteins into the membrane. Involved in integration of membrane proteins that insert both dependently and independently of the Sec translocase complex, as well as at least some lipoproteins. Aids folding of multispanning membrane proteins. This Dinoroseobacter shibae (strain DSM 16493 / NCIMB 14021 / DFL 12) protein is Membrane protein insertase YidC.